Reading from the N-terminus, the 214-residue chain is MKFFLDTANVEAIRAINELGVVDGVTTNPSIISREGRDFETVIKEICEIVDGPISAEVTGLTAEEMIAEARNIAKWHDNVVVKIPMTTEGLKATNVLSQEGIKTNVTLIFTVSQGLMAMKAGATYISPFIGRLEDIGADPYQLISDLRGIIDLYGFQAEIIAASIRTAAHVEAVAQLGAHIATIPDPLFAKMTEHPLTTNGLKTFMEDWASFKK.

The Schiff-base intermediate with substrate role is filled by Lys-83.

This sequence belongs to the transaldolase family. Type 3B subfamily.

It localises to the cytoplasm. The catalysed reaction is D-sedoheptulose 7-phosphate + D-glyceraldehyde 3-phosphate = D-erythrose 4-phosphate + beta-D-fructose 6-phosphate. It functions in the pathway carbohydrate degradation; pentose phosphate pathway; D-glyceraldehyde 3-phosphate and beta-D-fructose 6-phosphate from D-ribose 5-phosphate and D-xylulose 5-phosphate (non-oxidative stage): step 2/3. Functionally, transaldolase is important for the balance of metabolites in the pentose-phosphate pathway. The chain is Probable transaldolase from Streptococcus equi subsp. equi (strain 4047).